The primary structure comprises 495 residues: Galactose-1-phosphate uridylyltransferase (495 aa).

This sequence belongs to the galactose-1-phosphate uridylyltransferase type 2 family.

The protein resides in the cytoplasm. It carries out the reaction alpha-D-galactose 1-phosphate + UDP-alpha-D-glucose = alpha-D-glucose 1-phosphate + UDP-alpha-D-galactose. It functions in the pathway carbohydrate metabolism; galactose metabolism. The polypeptide is Galactose-1-phosphate uridylyltransferase (Ligilactobacillus salivarius (strain UCC118) (Lactobacillus salivarius)).